A 1709-amino-acid polypeptide reads, in one-letter code: Intraflagellar transport protein 122 (1709 aa).

2 WD repeats span residues 51–89 (TQHP…ALFK) and 132–171 (SFKG…LNSC). The interval 209 to 229 (TIPQTVTPSASASGRSGSGKR) is disordered. A WD 3 repeat occupies 634-673 (LHRSPIVSLDISPDRKYISVVDRSDVVSVYKFLDDSEIVL). One copy of the LRR 1 repeat lies at 1231-1256 (IEALERLRLSGNTSKEAIIIKQLIDA). The tract at residues 1378 to 1404 (LSGEDTVKASSQRSKKDNPPSLRSTIG) is disordered. The stretch at 1414-1436 (LGSLAHIDLGINNMNIPPGISEL) is one LRR 2 repeat.

It localises to the cell projection. The protein localises to the cilium. It is found in the flagellum. The protein resides in the cytoplasm. Its subcellular location is the cytoskeleton. It localises to the flagellum axoneme. The protein localises to the flagellum basal body. Functionally, component of the intraflagellar transport complex A (IFT-A) involved in flagellar assembly. This Giardia intestinalis (strain ATCC 50803 / WB clone C6) (Giardia lamblia) protein is Intraflagellar transport protein 122.